A 120-amino-acid chain; its full sequence is NAD(P)H-quinone oxidoreductase subunit 3 (120 aa).

Transmembrane regions (helical) follow at residues 2 to 22 (FVLSGYEYFLGFLIVSSLVPI), 64 to 84 (MFALVFVVFDVETVFLYPWAV), and 89 to 109 (LGLLAFVEALIFIAILVIALV).

The protein belongs to the complex I subunit 3 family. As to quaternary structure, NDH-1 can be composed of about 15 different subunits; different subcomplexes with different compositions have been identified which probably have different functions.

Its subcellular location is the cellular thylakoid membrane. The enzyme catalyses a plastoquinone + NADH + (n+1) H(+)(in) = a plastoquinol + NAD(+) + n H(+)(out). It carries out the reaction a plastoquinone + NADPH + (n+1) H(+)(in) = a plastoquinol + NADP(+) + n H(+)(out). Functionally, NDH-1 shuttles electrons from an unknown electron donor, via FMN and iron-sulfur (Fe-S) centers, to quinones in the respiratory and/or the photosynthetic chain. The immediate electron acceptor for the enzyme in this species is believed to be plastoquinone. Couples the redox reaction to proton translocation, and thus conserves the redox energy in a proton gradient. Cyanobacterial NDH-1 also plays a role in inorganic carbon-concentration. This Picosynechococcus sp. (strain ATCC 27264 / PCC 7002 / PR-6) (Agmenellum quadruplicatum) protein is NAD(P)H-quinone oxidoreductase subunit 3.